The primary structure comprises 453 residues: CBL-interacting protein kinase 24 (453 aa).

Residues 18–271 form the Protein kinase domain; that stretch reads YEVGRTIGQG…IEQIREDTWF (254 aa). ATP is bound by residues 24-32 and Lys-47; that span reads IGQGTFAKV. The active-site Proton acceptor is Asp-141. The tract at residues 159–186 is activation loop; sequence DFGLSTLAQKGVGLLHTTCGTPNYVAPE. Residues 310 to 336 form the NAF domain; it reads NDGGPLVMNAFEMITLSQGLDLSALFD. Positions 343 to 372 are PPI; the sequence is KRQTRFVSRKPAKTIVATIEVVAETMGLKV.

Belongs to the protein kinase superfamily. CAMK Ser/Thr protein kinase family. SNF1 subfamily. In terms of assembly, interacts with CBL4. Mn(2+) serves as cofactor.

The catalysed reaction is L-seryl-[protein] + ATP = O-phospho-L-seryl-[protein] + ADP + H(+). It carries out the reaction L-threonyl-[protein] + ATP = O-phospho-L-threonyl-[protein] + ADP + H(+). Its function is as follows. Involved in the regulatory pathway for the control of intracellular Na(+) and K(+) homeostasis and salt tolerance. Operates in synergy with CBL4 to activate the plasma membrane Na(+)/H(+) antiporter SOS1. CIPK serine-threonine protein kinases interact with CBL proteins. Binding of a CBL protein to the regulatory NAF domain of CIPK protein lead to the activation of the kinase in a calcium-dependent manner. This is CBL-interacting protein kinase 24 (CIPK24) from Oryza sativa subsp. japonica (Rice).